The primary structure comprises 477 residues: Stromelysin-1 (477 aa).

The first 17 residues, 1-17 (MKGLPVLLWLCVVVCSS), serve as a signal peptide directing secretion. A propeptide spans 18-99 (YPLHDSARDD…PRCGVPDVGG (82 aa)) (activation peptide). The Cysteine switch signature appears at 90–97 (PRCGVPDV). Position 92 (Cys92) interacts with Zn(2+). Asp124 and Asp158 together coordinate Ca(2+). Zn(2+) contacts are provided by His168 and Asp170. Residues Asp175, Gly176, Gly178, and Val180 each coordinate Ca(2+). Residue His183 participates in Zn(2+) binding. Ca(2+)-binding residues include Gly190, Asn192, and Asp194. A Zn(2+)-binding site is contributed by His196. The Ca(2+) site is built by Asp198, Asp199, and Glu201. Position 218 (His218) interacts with Zn(2+). The active site involves Glu219. His222 and His228 together coordinate Zn(2+). 4 Hemopexin repeats span residues 287–336 (SPMC…WPSL), 337–383 (PSNM…GLPA), 385–433 (VKKI…FPGV), and 434–477 (DSRV…WFNC). A disulfide bridge links Cys290 with Cys477. Asp297 is a Ca(2+) binding site. Residues Asp389 and Asp438 each coordinate Ca(2+).

The protein belongs to the peptidase M10A family. Requires Ca(2+) as cofactor. Zn(2+) serves as cofactor.

Its subcellular location is the secreted. The protein resides in the extracellular space. It is found in the extracellular matrix. It catalyses the reaction Preferential cleavage where P1', P2' and P3' are hydrophobic residues.. Functionally, metalloproteinase with a rather broad substrate specificity that can degrade fibronectin, laminin, gelatins of type I, III, IV, and V; collagens III, IV, X, and IX, and cartilage proteoglycans. Activates different molecules including growth factors, plasminogen or other matrix metalloproteinases such as MMP9. Once released into the extracellular matrix (ECM), the inactive pro-enzyme is activated by the plasmin cascade signaling pathway. Also acts intracellularly. For example, in dopaminergic neurons, gets activated by the serine protease HTRA2 upon stress and plays a pivotal role in DA neuronal degeneration by mediating microglial activation and alpha-synuclein/SNCA cleavage. In addition, plays a role in immune response and possesses antiviral activity against various viruses. Mechanistically, translocates from the cytoplasm into the cell nucleus upon virus infection to influence NF-kappa-B activities. This chain is Stromelysin-1 (Mmp3), found in Mus musculus (Mouse).